Consider the following 419-residue polypeptide: Octopressin receptor (419 aa).

Topologically, residues 1–37 are extracellular; it reads MENFTEENLHPWITTTTRVYNNVTIFPQYDDELGKFE. Asparagine 3 and asparagine 22 each carry an N-linked (GlcNAc...) asparagine glycan. A helical transmembrane segment spans residues 38–58; it reads IMVLCILCFMALFGNAVVLIV. The Cytoplasmic segment spans residues 59-80; the sequence is LRIKKTTLTRMQLLIVYLSVTD. The helical transmembrane segment at 81–101 threads the bilayer; the sequence is ISVALFHILPTIILKINVYFL. Over 102-108 the chain is Extracellular; sequence GDISACR. Cysteines 107 and 182 form a disulfide. The helical transmembrane segment at 109 to 129 threads the bilayer; sequence VYQFITVAELYASSFVLIVTA. Residues 130–153 are Cytoplasmic-facing; that stretch reads LDRYISICHPLAAHMWTNRRVHMT. Residues 154–174 form a helical membrane-spanning segment; the sequence is TALALFLALMCSLPQLDAVLV. Residues 175–192 are Extracellular-facing; that stretch reads DFHGGKLCRPNLTTELAN. An N-linked (GlcNAc...) asparagine glycan is attached at asparagine 185. A helical transmembrane segment spans residues 193–213; the sequence is IAYSWWAFCSVFFVPLLLLIF. The Cytoplasmic segment spans residues 214–292; that stretch reads FYGRICFVVW…VSKSKIKTIK (79 aa). Positions 253–274 are disordered; the sequence is SQTSSENRVKNYSDARDKDSSR. The segment covering 259-274 has biased composition (basic and acidic residues); sequence NRVKNYSDARDKDSSR. A helical transmembrane segment spans residues 293 to 313; the sequence is LTFSVVACFIICYTPFFTVLM. At 314-329 the chain is on the extracellular side; the sequence is ARTYDAELSSAQTPAL. A helical transmembrane segment spans residues 330 to 350; it reads VILSLLPSLNSCTNPWIYLAF. Residues 351–419 lie on the Cytoplasmic side of the membrane; it reads SGKVWCRQQS…TTALMSSSPC (69 aa).

It belongs to the G-protein coupled receptor 1 family. Vasopressin/oxytocin receptor subfamily. As to expression, present in the nervous system and peripheral tissues.

The protein localises to the cell membrane. Acts as a receptor for octopressin. The chain is Octopressin receptor from Octopus vulgaris (Common octopus).